We begin with the raw amino-acid sequence, 227 residues long: Cytochrome c oxidase subunit 2 (227 aa).

Residues 1–14 (MAHPVQLGFQDAAS) are Mitochondrial intermembrane-facing. Residues 15–45 (PIMEELLYFHDHTLMIMFLISSLVLYIISLM) traverse the membrane as a helical segment. Residues 46 to 59 (LTTKLTHTSTMDAQ) are Mitochondrial matrix-facing. A helical membrane pass occupies residues 60–87 (EVETVWTILPAAILILIALPSLRILYMM). The Mitochondrial intermembrane segment spans residues 88 to 227 (DEITSPSLTL…HFEEWLLFTL (140 aa)). 6 residues coordinate Cu cation: His-161, Cys-196, Glu-198, Cys-200, His-204, and Met-207. A Mg(2+)-binding site is contributed by Glu-198.

This sequence belongs to the cytochrome c oxidase subunit 2 family. As to quaternary structure, component of the cytochrome c oxidase (complex IV, CIV), a multisubunit enzyme composed of 14 subunits. The complex is composed of a catalytic core of 3 subunits MT-CO1, MT-CO2 and MT-CO3, encoded in the mitochondrial DNA, and 11 supernumerary subunits COX4I, COX5A, COX5B, COX6A, COX6B, COX6C, COX7A, COX7B, COX7C, COX8 and NDUFA4, which are encoded in the nuclear genome. The complex exists as a monomer or a dimer and forms supercomplexes (SCs) in the inner mitochondrial membrane with NADH-ubiquinone oxidoreductase (complex I, CI) and ubiquinol-cytochrome c oxidoreductase (cytochrome b-c1 complex, complex III, CIII), resulting in different assemblies (supercomplex SCI(1)III(2)IV(1) and megacomplex MCI(2)III(2)IV(2)). Found in a complex with TMEM177, COA6, COX18, COX20, SCO1 and SCO2. Interacts with TMEM177 in a COX20-dependent manner. Interacts with COX20. Interacts with COX16. Requires Cu cation as cofactor.

It is found in the mitochondrion inner membrane. The enzyme catalyses 4 Fe(II)-[cytochrome c] + O2 + 8 H(+)(in) = 4 Fe(III)-[cytochrome c] + 2 H2O + 4 H(+)(out). Functionally, component of the cytochrome c oxidase, the last enzyme in the mitochondrial electron transport chain which drives oxidative phosphorylation. The respiratory chain contains 3 multisubunit complexes succinate dehydrogenase (complex II, CII), ubiquinol-cytochrome c oxidoreductase (cytochrome b-c1 complex, complex III, CIII) and cytochrome c oxidase (complex IV, CIV), that cooperate to transfer electrons derived from NADH and succinate to molecular oxygen, creating an electrochemical gradient over the inner membrane that drives transmembrane transport and the ATP synthase. Cytochrome c oxidase is the component of the respiratory chain that catalyzes the reduction of oxygen to water. Electrons originating from reduced cytochrome c in the intermembrane space (IMS) are transferred via the dinuclear copper A center (CU(A)) of subunit 2 and heme A of subunit 1 to the active site in subunit 1, a binuclear center (BNC) formed by heme A3 and copper B (CU(B)). The BNC reduces molecular oxygen to 2 water molecules using 4 electrons from cytochrome c in the IMS and 4 protons from the mitochondrial matrix. The polypeptide is Cytochrome c oxidase subunit 2 (MT-CO2) (Varecia variegata (Black-and-white ruffed lemur)).